Here is a 572-residue protein sequence, read N- to C-terminus: MLQEDKSSETMHDPSTRGVETRNVTAVDSPLETATTSESPETERTNVAPAKRDWRFWALLVSISLAGLLTALEGTITSTALPSIVNDLGGGHLYVWVVNGYLFAMTAMQPMYGQLANIFGRRWPMLGATALFVLGSGICGGATNIETLIAGRILQGIGASGTTVLTETIICDVVPLRERSKFLAIVMGMIFLGTALGPFFAGLIVQYSTWRWTFYLALPVGGAALVALFSFLKVKYQKETNLATKISTIDWAGNALFVAAISSVLIGLSWAGSVYAWSSFRVLVPLFVGIAGMGLFMVFEGSRFAPNPTVPLHLFGNRTSVGVMIMTFFHGIITIWQLYFMPVYFQGVLGSSPSRSGVQILATILAILPAAGIGGFLMTKMGRYKPIHYASWAVTLIGLGLFSLLDSGSSTGAWVGFQIVYSMGAGMLVPTLLPALLAPLSESDTALGAATWSFVRSFGMVWGTAIPAAVFNTRSDQLAPELINSPALRADIMGGKAYEHATSAFLGTLSDAASEQMKNVFSRSLRQTWLVSLAFAGMGLLAATLAREVPMRSELDTEYGMEERKPKKASEA.

The span at 1–15 (MLQEDKSSETMHDPS) shows a compositional bias: basic and acidic residues. Residues 1–46 (MLQEDKSSETMHDPSTRGVETRNVTAVDSPLETATTSESPETERTN) are disordered. N-linked (GlcNAc...) asparagine glycosylation occurs at Asn-23. A compositionally biased stretch (low complexity) spans 29–39 (SPLETATTSES). 8 helical membrane-spanning segments follow: residues 56 to 76 (FWAL…EGTI), 88 to 108 (LGGG…MTAM), 123 to 143 (WPML…GGAT), 156 to 176 (GIGA…VVPL), 185 to 205 (IVMG…GLIV), 212 to 232 (WTFY…FSFL), 255 to 275 (ALFV…GSVY), and 282 to 302 (VLVP…FEGS). N-linked (GlcNAc...) asparagine glycosylation occurs at Asn-317. 6 consecutive transmembrane segments (helical) span residues 321–341 (VGVM…LYFM), 358–378 (VQIL…GFLM), 386–406 (PIHY…SLLD), 419–439 (IVYS…LLAP), 451–471 (TWSF…AAVF), and 529–549 (WLVS…AREV).

The protein belongs to the major facilitator superfamily.

Its subcellular location is the membrane. In terms of biological role, MFS-type transporter; part of the gene cluster that mediates the biosynthesis of pyrrocidines, fungal natural products containing a macrocyclic para-cyclophane connected to a decahydrofluorene ring system that show potent antibiotic activities toward Gram-negative bacteria. The sequence is that of MFS-type transporter pydD from Acremonium sp.